Reading from the N-terminus, the 733-residue chain is Tyrosine-protein kinase ptk (733 aa).

2 helical membrane passes run 19 to 39 and 438 to 458; these read LFFS…LSLI and LQIL…LALL. 542-550 contributes to the ATP binding site; the sequence is GPAPEVGKS.

The protein belongs to the etk/wzc family. It depends on Mg(2+) as a cofactor. Requires Mn(2+) as cofactor. Post-translationally, autophosphorylated on several Tyr residues. Dephosphorylated by ptp.

Its subcellular location is the cell inner membrane. It catalyses the reaction L-tyrosyl-[protein] + ATP = O-phospho-L-tyrosyl-[protein] + ADP + H(+). Its pathway is glycan metabolism; exopolysaccharide biosynthesis. Its function is as follows. May be involved in the production and the transport of exopolysaccharides. This Acinetobacter johnsonii protein is Tyrosine-protein kinase ptk (ptk).